A 131-amino-acid chain; its full sequence is Small ribosomal subunit protein uS8 (131 aa).

The protein belongs to the universal ribosomal protein uS8 family. As to quaternary structure, part of the 30S ribosomal subunit. Contacts proteins S5 and S12.

Its function is as follows. One of the primary rRNA binding proteins, it binds directly to 16S rRNA central domain where it helps coordinate assembly of the platform of the 30S subunit. This chain is Small ribosomal subunit protein uS8, found in Burkholderia ambifaria (strain MC40-6).